An 893-amino-acid chain; its full sequence is Phosphatidate phosphatase LPIN2 (893 aa).

The segment at 1 to 108 (MNYVGQLAGQ…LPAYLATSPI (108 aa)) is N-LIP. Ser-106 is subject to Phosphoserine. The disordered stretch occupies residues 122–216 (LVKSSGNERP…EDYKEPSLFH (95 aa)). The span at 123–151 (VKSSGNERPAQSSDVSHTLESEAVFTQSS) shows a compositional bias: polar residues. Basic residues predominate over residues 152 to 162 (VKKKKRRRKKC). Positions 153 to 158 (KKKKRR) match the Nuclear localization signal motif. Phosphoserine occurs at positions 174, 186, and 187. Over residues 204–213 (LKEEDYKEPS) the composition is skewed to basic and acidic residues. A phosphoserine mark is found at Ser-243 and Ser-303. Disordered regions lie at residues 357–400 (LLDA…PDDI) and 417–456 (FPKS…TECL). Positions 360–371 (ADPVPSPSAEAP) are enriched in low complexity. Positions 384-393 (KKKGVHKRSQ) are enriched in basic residues. The segment covering 423–445 (DPGSRQWPESDTFSGSQSPQSVG) has biased composition (polar residues). Position 563 is a phosphoserine (Ser-563). The segment at 568–611 (LPETKEGKSEVPPANDLPSNAEEPTSARPAENDTSSDEGSQELE) is disordered. Residues 601-611 (TSSDEGSQELE) show a composition bias toward acidic residues. The tract at residues 632-834 (YKKSLRLSSD…RIFTVNPKGE (203 aa)) is C-LIP. A DXDXT motif motif is present at residues 686–690 (DIDGT). Residues 697 to 701 (LGQIL) carry the LXXIL motif motif.

This sequence belongs to the lipin family. The cofactor is Mg(2+). As to expression, expressed at high level in liver and to some extend in lung, kidney, placenta, spleen, thymus, lymph node, prostate, testes, small intestine, and colon. Expressed also in circulating red blood cells and site of lymphopoiesis.

The protein localises to the nucleus. Its subcellular location is the cytoplasm. It is found in the cytosol. The protein resides in the endoplasmic reticulum membrane. The enzyme catalyses a 1,2-diacyl-sn-glycero-3-phosphate + H2O = a 1,2-diacyl-sn-glycerol + phosphate. With respect to regulation, inhibited by N-ethylmaleimide. Acts as a magnesium-dependent phosphatidate phosphatase enzyme which catalyzes the conversion of phosphatidic acid to diacylglycerol during triglyceride, phosphatidylcholine and phosphatidylethanolamine biosynthesis in the endoplasmic reticulum membrane. Plays important roles in controlling the metabolism of fatty acids at different levels. Also acts as a nuclear transcriptional coactivator for PPARGC1A to modulate lipid metabolism. This chain is Phosphatidate phosphatase LPIN2, found in Mus musculus (Mouse).